A 98-amino-acid polypeptide reads, in one-letter code: NADH-ubiquinone oxidoreductase chain 4L (98 aa).

3 consecutive transmembrane segments (helical) span residues 1–21 (MPVIYINLIAAFFMAFMGLLI), 29–49 (SLLCLEGMMLSLFILNSTLAL), and 61–81 (IILLVFAACEAALGLSLLVMV).

The protein belongs to the complex I subunit 4L family. Core subunit of respiratory chain NADH dehydrogenase (Complex I) which is composed of 45 different subunits.

It localises to the mitochondrion inner membrane. It catalyses the reaction a ubiquinone + NADH + 5 H(+)(in) = a ubiquinol + NAD(+) + 4 H(+)(out). In terms of biological role, core subunit of the mitochondrial membrane respiratory chain NADH dehydrogenase (Complex I) which catalyzes electron transfer from NADH through the respiratory chain, using ubiquinone as an electron acceptor. Part of the enzyme membrane arm which is embedded in the lipid bilayer and involved in proton translocation. In Echinops telfairi (Lesser hedgehog tenrec), this protein is NADH-ubiquinone oxidoreductase chain 4L (MT-ND4L).